The primary structure comprises 132 residues: Large ribosomal subunit protein uL14 (132 aa).

The protein belongs to the universal ribosomal protein uL14 family. As to quaternary structure, part of the 50S ribosomal subunit. Forms a cluster with proteins L3 and L24e, part of which may contact the 16S rRNA in 2 intersubunit bridges.

In terms of biological role, binds to 23S rRNA. Forms part of two intersubunit bridges in the 70S ribosome. This Methanococcus maripaludis (strain C7 / ATCC BAA-1331) protein is Large ribosomal subunit protein uL14.